Reading from the N-terminus, the 632-residue chain is Thioredoxin domain-containing protein C959.05c (632 aa).

Residues 1–22 (MKLFLYHFTFIVYYFIISFSYA) form the signal peptide. N35, N41, and N140 each carry an N-linked (GlcNAc...) asparagine glycan. One can recognise a Thioredoxin domain in the interval 153-284 (SDSSSTDPAF…LLSYSNQVAS (132 aa)). A disulfide bridge connects residues C209 and C212. N557 carries N-linked (GlcNAc...) asparagine glycosylation. A helical membrane pass occupies residues 583–603 (LIVFNLLIALLILSILTIISA).

This sequence belongs to the protein disulfide isomerase family.

It localises to the endoplasmic reticulum membrane. It catalyses the reaction Catalyzes the rearrangement of -S-S- bonds in proteins.. In terms of biological role, acts as a membrane-bound chaperone in endoplasmic reticulum quality control. Probably facilitates presentation of substrate to membrane-bound components of the degradation machinery. The chain is Thioredoxin domain-containing protein C959.05c from Schizosaccharomyces pombe (strain 972 / ATCC 24843) (Fission yeast).